The primary structure comprises 200 residues: High frequency lysogenization protein HflD homolog (200 aa).

This sequence belongs to the HflD family.

The protein resides in the cytoplasm. The protein localises to the cell inner membrane. The sequence is that of High frequency lysogenization protein HflD homolog from Pseudoalteromonas translucida (strain TAC 125).